The following is a 1388-amino-acid chain: DNA-directed RNA polymerase subunit beta' (1388 aa).

Residues C65, C67, C80, and C83 each coordinate Zn(2+). 3 residues coordinate Mg(2+): D456, D458, and D460. Positions 812, 887, 894, and 897 each coordinate Zn(2+).

It belongs to the RNA polymerase beta' chain family. As to quaternary structure, the RNAP catalytic core consists of 2 alpha, 1 beta, 1 beta' and 1 omega subunit. When a sigma factor is associated with the core the holoenzyme is formed, which can initiate transcription. Mg(2+) serves as cofactor. Zn(2+) is required as a cofactor.

It catalyses the reaction RNA(n) + a ribonucleoside 5'-triphosphate = RNA(n+1) + diphosphate. Functionally, DNA-dependent RNA polymerase catalyzes the transcription of DNA into RNA using the four ribonucleoside triphosphates as substrates. This chain is DNA-directed RNA polymerase subunit beta', found in Protochlamydia amoebophila (strain UWE25).